The sequence spans 442 residues: Probable carboxypeptidase PABG_01461 (442 aa).

An N-terminal signal peptide occupies residues 1–20 (MKLQYLVALLSVQAVPPVTA). N-linked (GlcNAc...) asparagine glycosylation is present at N102. A Zn(2+)-binding site is contributed by D160. E192 (proton acceptor) is an active-site residue. E193 is a binding site for Zn(2+). An N-linked (GlcNAc...) asparagine glycan is attached at N343.

Belongs to the peptidase M20A family. It depends on Zn(2+) as a cofactor.

It localises to the secreted. The chain is Probable carboxypeptidase PABG_01461 from Paracoccidioides brasiliensis (strain Pb03).